Here is a 224-residue protein sequence, read N- to C-terminus: PKHD-type hydroxylase Tgr7_2199 (224 aa).

Positions 78-176 (KLSGAFFARY…RLVAVAWAES (99 aa)) constitute a Fe2OG dioxygenase domain. The Fe cation site is built by His-96, Asp-98, and His-157. Arg-167 contributes to the 2-oxoglutarate binding site.

It depends on Fe(2+) as a cofactor. The cofactor is L-ascorbate.

This chain is PKHD-type hydroxylase Tgr7_2199, found in Thioalkalivibrio sulfidiphilus (strain HL-EbGR7).